We begin with the raw amino-acid sequence, 513 residues long: Na(+)/H(+) antiporter NhaB (513 aa).

Helical transmembrane passes span 21–41 (LCII…SPFI), 43–63 (GWTL…CYPL), 88–108 (IIAN…IYFM), 137–157 (AAFL…ISVG), 202–222 (LLMH…VGEP), 235–255 (FIEF…CGIA), 299–318 (MAIQ…LHLA), 322–344 (IIGL…HAIG), 350–370 (PMPF…IVDL), 389–409 (LALF…VFVG), and 477–497 (MALP…EYLL).

Belongs to the NhaB Na(+)/H(+) (TC 2.A.34) antiporter family.

The protein localises to the cell inner membrane. The enzyme catalyses 2 Na(+)(in) + 3 H(+)(out) = 2 Na(+)(out) + 3 H(+)(in). In terms of biological role, na(+)/H(+) antiporter that extrudes sodium in exchange for external protons. The protein is Na(+)/H(+) antiporter NhaB of Haemophilus ducreyi (strain 35000HP / ATCC 700724).